We begin with the raw amino-acid sequence, 116 residues long: Large ribosomal subunit protein uL18 (116 aa).

It belongs to the universal ribosomal protein uL18 family. Part of the 50S ribosomal subunit; part of the 5S rRNA/L5/L18/L25 subcomplex. Contacts the 5S and 23S rRNAs.

In terms of biological role, this is one of the proteins that bind and probably mediate the attachment of the 5S RNA into the large ribosomal subunit, where it forms part of the central protuberance. This chain is Large ribosomal subunit protein uL18, found in Exiguobacterium sibiricum (strain DSM 17290 / CCUG 55495 / CIP 109462 / JCM 13490 / 255-15).